Reading from the N-terminus, the 544-residue chain is Membrane protein insertase YidC (544 aa).

Residues 4-24 (KALLALVLSAAVLLIYQIFIY) form a helical membrane-spanning segment. The segment at 44–78 (NPAAPVSPQTPADEPSSGSAANPETAAALPVDGTE) is disordered. The next 3 helical transmembrane spans lie at 363 to 383 (NYGI…WPLG), 434 to 454 (LPMI…LYAI), and 508 to 528 (PVIF…YWLF).

The protein belongs to the OXA1/ALB3/YidC family. Type 1 subfamily. In terms of assembly, interacts with the Sec translocase complex via SecD. Specifically interacts with transmembrane segments of nascent integral membrane proteins during membrane integration.

It localises to the cell inner membrane. Functionally, required for the insertion and/or proper folding and/or complex formation of integral membrane proteins into the membrane. Involved in integration of membrane proteins that insert both dependently and independently of the Sec translocase complex, as well as at least some lipoproteins. Aids folding of multispanning membrane proteins. The sequence is that of Membrane protein insertase YidC from Syntrophus aciditrophicus (strain SB).